An 872-amino-acid polypeptide reads, in one-letter code: DNA mismatch repair protein MutS (872 aa).

An ATP-binding site is contributed by Gly602–Ser609.

It belongs to the DNA mismatch repair MutS family.

This protein is involved in the repair of mismatches in DNA. It is possible that it carries out the mismatch recognition step. This protein has a weak ATPase activity. The chain is DNA mismatch repair protein MutS from Staphylococcus aureus (strain bovine RF122 / ET3-1).